We begin with the raw amino-acid sequence, 62 residues long: MRPMQLDMLSEMDDAGSSMAMDVDDLEAMEILNEGGLVSDNKLADADFFNKFDDDFDDTDIN.

Interacts with the COP9 signalosome. In terms of tissue distribution, expressed in roots, flowers, siliques, stems, leaves and seeds. In flowers, detected in petals, anthers and pistils.

Mediates responses to the synthetic auxin 2,4-dichlorophenoxyacetic acid (2,4-D). Not involved in the response to indole-3-acetic acid (IAA). Interacts with RUB modification-related components and may regulate the cullin-ring ubiquitin E3 ligase complex (CRL) activity. This Arabidopsis thaliana (Mouse-ear cress) protein is Small acidic protein 1 (SMAP1).